A 303-amino-acid chain; its full sequence is Caspase-7 (303 aa).

A disordered region spans residues 1-27; it reads MADDQNCAPELEKADPSGEDGVDAKPD. An N-acetylalanine modification is found at Ala2. A propeptide spans 2-23 (N-terminally processed); it reads ADDQNCAPELEKADPSGEDGVD. Basic and acidic residues predominate over residues 10-27; sequence ELEKADPSGEDGVDAKPD. Ser30 is subject to Phosphoserine. Positions 38 to 41 are exosite; it reads KKKK. The interval 76-87 is loop L1; the sequence is KNFDKVTGMDVR. The active site involves His144. Thr173 is subject to Phosphothreonine. Cys186 is a catalytic residue. The loop L2 stretch occupies residues 187-196; it reads RGTELDDGVQ. Residues 199 to 206 constitute a propeptide that is removed on maturation; the sequence is SGPINETD. The loop L3 stretch occupies residues 226 to 238; it reads VPGYYSWRNPGKG. Ser239 bears the Phosphoserine mark. The interval 274-288 is loop L4; the sequence is ESQCDDPCFNEKKQI.

It belongs to the peptidase C14A family. Heterotetramer that consists of two anti-parallel arranged heterodimers, each one formed by a 20 kDa (p20) and a 11 kDa (p11) subunit. Interacts with XIAP (via its second BIR domain); inhibiting CASP7 activity. Interacts with BIRC6/bruce. Interacts with ATXN3 (short isoform 1). Interacts with HSPA5. Cleavage by different proteases, such as granzyme B (GZMB), caspase-1 (CASP1), caspase-8 (CASP8) or caspase-9 (CASP9) generate the two active subunits. Its involvement in different programmed cell death processes is probably specified by the protease that activates CASP7. Cleaved and activated by initiator caspases (CASP8 and/or CASP9), leading to execution phase of apoptosis. Cleavage and maturation by GZMB regulates granzyme-mediated programmed cell death. Cleaved and activated by CASP1 in response to bacterial infection. Propeptide domains can also be cleaved efficiently by CASP3. Active heterodimers between the small subunit of caspase-7 and the large subunit of CASP3, and vice versa, also occur. Also cleaved at the N-terminus at alternative sites by CAPN1, leading to its activation. In terms of processing, phosphorylation at Ser-30 and Ser-239 by PAK2 inhibits its activity. Phosphorylation at Ser-30 prevents cleavage and activation by initiator caspase CASP9, while phosphorylation at Ser-239 prevents thiol protease activity by preventing substrate-binding. Post-translationally, ubiquitinated by BIRC6; this activity is inhibited by DIABLO/SMAC.

It is found in the cytoplasm. Its subcellular location is the cytosol. The protein localises to the nucleus. The protein resides in the secreted. It localises to the extracellular space. The catalysed reaction is Strict requirement for an Asp residue at position P1 and has a preferred cleavage sequence of Asp-Glu-Val-Asp-|-.. Its activity is regulated as follows. During activation, the N-terminal disordered prodomain is removed by cleavage. Concomitantly, double cleavage gives rise to a large Caspase-7 subunit p20 and a small Caspase-7 subunit p11. The two large and two small subunits then assemble to form the active CASP7 complex. Can be cleaved and activated by different caspases, depending on the context. Cleaved and activated by initiator caspases (CASP8 and/or CASP9), leading to execution phase of apoptosis. Cleavage and maturation by GZMB regulates granzyme-mediated programmed cell death. Cleavage and maturation by CASP1 regulates pyroptosis. Inhibited by XIAP, which directly binds to the active site pocket and obstructs substrate entry. Phosphorylation at Ser-30 and Ser-239 by PAK2 inhibits its activity. Inhibited by BIRC6; following inhibition of BIRC6-caspase binding by DIABLO/SMAC, BIRC6 is subjected to caspase cleavage, leading to an increase in active caspases. Its function is as follows. Thiol protease involved in different programmed cell death processes, such as apoptosis, pyroptosis or granzyme-mediated programmed cell death, by proteolytically cleaving target proteins. Has a marked preference for Asp-Glu-Val-Asp (DEVD) consensus sequences, with some plasticity for alternate non-canonical sequences. Its involvement in the different programmed cell death processes is probably determined by upstream proteases that activate CASP7. Acts as an effector caspase involved in the execution phase of apoptosis: following cleavage and activation by initiator caspases (CASP8 and/or CASP9), mediates execution of apoptosis by catalyzing cleavage of proteins, such as CLSPN, PARP1, PTGES3 and YY1. Compared to CASP3, acts as a minor executioner caspase and cleaves a limited set of target proteins. Acts as a key regulator of the inflammatory response in response to bacterial infection by catalyzing cleavage and activation of the sphingomyelin phosphodiesterase SMPD1 in the extracellular milieu, thereby promoting membrane repair. Regulates pyroptosis in intestinal epithelial cells: cleaved and activated by CASP1 in response to S.typhimurium infection, promoting its secretion to the extracellular milieu, where it catalyzes activation of SMPD1, generating ceramides that repair membranes and counteract the action of gasdermin-D (GSDMD) pores. Regulates granzyme-mediated programmed cell death in hepatocytes: cleaved and activated by granzyme B (GZMB) in response to bacterial infection, promoting its secretion to the extracellular milieu, where it catalyzes activation of SMPD1, generating ceramides that repair membranes and counteract the action of perforin (PRF1) pores. Following cleavage by CASP1 in response to inflammasome activation, catalyzes processing and inactivation of PARP1, alleviating the transcription repressor activity of PARP1. Acts as an inhibitor of type I interferon production during virus-induced apoptosis by mediating cleavage of antiviral proteins CGAS, IRF3 and MAVS, thereby preventing cytokine overproduction. Cleaves and activates sterol regulatory element binding proteins (SREBPs). Cleaves phospholipid scramblase proteins XKR4, XKR8 and XKR9. Cleaves BIRC6 following inhibition of BIRC6-caspase binding by DIABLO/SMAC. The polypeptide is Caspase-7 (CASP7) (Mesocricetus auratus (Golden hamster)).